A 141-amino-acid chain; its full sequence is High mobility group B protein 3 (141 aa).

Composition is skewed to basic and acidic residues over residues 1–12 (MKGAKSKAETRS) and 70–110 (GGEK…LEEG). 2 disordered regions span residues 1-40 (MKGA…RPSS) and 54-141 (KEEH…EDDD). The segment at residues 35–104 (PKRPSSAFFV…EYEKNMKAYN (70 aa)) is a DNA-binding region (HMG box). Ser-122 carries the post-translational modification Phosphoserine. Over residues 124-141 (VNDEDDAEDGSEEEEDDD) the composition is skewed to acidic residues.

This sequence belongs to the HMGB family. Expressed in lateral roots, root tips, stems, cotyledons, leaves and flowers (excluding ovary and pedicels).

Its subcellular location is the nucleus. The protein localises to the cytoplasm. It localises to the cytosol. Its function is as follows. Binds preferentially double-stranded DNA. The chain is High mobility group B protein 3 (HMGB3) from Arabidopsis thaliana (Mouse-ear cress).